The sequence spans 1054 residues: Bifunctional glutamine synthetase adenylyltransferase/adenylyl-removing enzyme (1054 aa).

Residues 1–535 (MRKTLPSIGA…LHRKLFYRPL (535 aa)) are adenylyl removase. Polar residues-rich tracts occupy residues 138–150 (SFSS…QGSD) and 165–175 (DTANTDLSTPG). The tract at residues 138–175 (SFSSESQQPQGSDSDSEFSFGADLSADDTANTDLSTPG) is disordered. Residues 541–1054 (NISVGTLKLS…WGVDSIEHDY (514 aa)) form an adenylyl transferase region.

Belongs to the GlnE family. The cofactor is Mg(2+).

The catalysed reaction is [glutamine synthetase]-O(4)-(5'-adenylyl)-L-tyrosine + phosphate = [glutamine synthetase]-L-tyrosine + ADP. It catalyses the reaction [glutamine synthetase]-L-tyrosine + ATP = [glutamine synthetase]-O(4)-(5'-adenylyl)-L-tyrosine + diphosphate. Functionally, involved in the regulation of glutamine synthetase GlnA, a key enzyme in the process to assimilate ammonia. When cellular nitrogen levels are high, the C-terminal adenylyl transferase (AT) inactivates GlnA by covalent transfer of an adenylyl group from ATP to specific tyrosine residue of GlnA, thus reducing its activity. Conversely, when nitrogen levels are low, the N-terminal adenylyl removase (AR) activates GlnA by removing the adenylyl group by phosphorolysis, increasing its activity. The regulatory region of GlnE binds the signal transduction protein PII (GlnB) which indicates the nitrogen status of the cell. This chain is Bifunctional glutamine synthetase adenylyltransferase/adenylyl-removing enzyme, found in Corynebacterium diphtheriae (strain ATCC 700971 / NCTC 13129 / Biotype gravis).